Here is a 249-residue protein sequence, read N- to C-terminus: DNA polymerase sliding clamp (249 aa).

This sequence belongs to the PCNA family. In terms of assembly, homotrimer. The subunits circularize to form a toroid; DNA passes through its center. Replication factor C (RFC) is required to load the toroid on the DNA.

Functionally, sliding clamp subunit that acts as a moving platform for DNA processing. Responsible for tethering the catalytic subunit of DNA polymerase and other proteins to DNA during high-speed replication. In Thermococcus onnurineus (strain NA1), this protein is DNA polymerase sliding clamp.